A 393-amino-acid polypeptide reads, in one-letter code: Riboflavin biosynthesis protein RibBA (393 aa).

The interval 1–200 (MQFDNIDSAL…IDDLIEYRKK (200 aa)) is DHBP synthase. D-ribulose 5-phosphate contacts are provided by residues 27–28 (RE), aspartate 32, 139–143 (RNGHT), and glutamate 163. Glutamate 28 provides a ligand contact to Mg(2+). Histidine 142 serves as a coordination point for Mg(2+). Positions 201-393 (LEPEIEFKAK…TKKIKMGHLI (193 aa)) are GTP cyclohydrolase II. Position 249–253 (249–253 (RLHSA)) interacts with GTP. Positions 254, 265, and 267 each coordinate Zn(2+). Residues glutamine 270, 291 to 293 (EGR), and threonine 313 each bind GTP. Residue aspartate 325 is the Proton acceptor; for GTP cyclohydrolase activity of the active site. The active-site Nucleophile; for GTP cyclohydrolase activity is arginine 327. Serine 348 and lysine 353 together coordinate GTP.

This sequence in the N-terminal section; belongs to the DHBP synthase family. In the C-terminal section; belongs to the GTP cyclohydrolase II family. Requires Mg(2+) as cofactor. It depends on Mn(2+) as a cofactor. The cofactor is Zn(2+).

It catalyses the reaction D-ribulose 5-phosphate = (2S)-2-hydroxy-3-oxobutyl phosphate + formate + H(+). The enzyme catalyses GTP + 4 H2O = 2,5-diamino-6-hydroxy-4-(5-phosphoribosylamino)-pyrimidine + formate + 2 phosphate + 3 H(+). Its pathway is cofactor biosynthesis; riboflavin biosynthesis; 2-hydroxy-3-oxobutyl phosphate from D-ribulose 5-phosphate: step 1/1. It functions in the pathway cofactor biosynthesis; riboflavin biosynthesis; 5-amino-6-(D-ribitylamino)uracil from GTP: step 1/4. Functionally, catalyzes the conversion of D-ribulose 5-phosphate to formate and 3,4-dihydroxy-2-butanone 4-phosphate. In terms of biological role, catalyzes the conversion of GTP to 2,5-diamino-6-ribosylamino-4(3H)-pyrimidinone 5'-phosphate (DARP), formate and pyrophosphate. This is Riboflavin biosynthesis protein RibBA from Staphylococcus aureus (strain COL).